A 190-amino-acid polypeptide reads, in one-letter code: UPF0200 protein TGAM_0868 (190 aa).

7–14 (GMPGSGKS) contacts ATP.

The protein belongs to the UPF0200 family.

The polypeptide is UPF0200 protein TGAM_0868 (Thermococcus gammatolerans (strain DSM 15229 / JCM 11827 / EJ3)).